Here is a 665-residue protein sequence, read N- to C-terminus: tRNA 5-methylaminomethyl-2-thiouridine biosynthesis bifunctional protein MnmC (665 aa).

Residues 1–243 (MSQTSLHHAR…KWAMLAGERV (243 aa)) are tRNA (mnm(5)s(2)U34)-methyltransferase. The interval 268-665 (IGGGIASAMT…RKLLKGKPLN (398 aa)) is FAD-dependent cmnm(5)s(2)U34 oxidoreductase.

The protein in the N-terminal section; belongs to the methyltransferase superfamily. tRNA (mnm(5)s(2)U34)-methyltransferase family. In the C-terminal section; belongs to the DAO family. FAD is required as a cofactor.

It is found in the cytoplasm. The catalysed reaction is 5-aminomethyl-2-thiouridine(34) in tRNA + S-adenosyl-L-methionine = 5-methylaminomethyl-2-thiouridine(34) in tRNA + S-adenosyl-L-homocysteine + H(+). In terms of biological role, catalyzes the last two steps in the biosynthesis of 5-methylaminomethyl-2-thiouridine (mnm(5)s(2)U) at the wobble position (U34) in tRNA. Catalyzes the FAD-dependent demodification of cmnm(5)s(2)U34 to nm(5)s(2)U34, followed by the transfer of a methyl group from S-adenosyl-L-methionine to nm(5)s(2)U34, to form mnm(5)s(2)U34. This is tRNA 5-methylaminomethyl-2-thiouridine biosynthesis bifunctional protein MnmC from Aeromonas salmonicida (strain A449).